Reading from the N-terminus, the 291-residue chain is Methionine aminopeptidase (291 aa).

His118 is a substrate binding site. Positions 135, 146, and 209 each coordinate a divalent metal cation. His216 lines the substrate pocket. 2 residues coordinate a divalent metal cation: Glu241 and Glu273.

It belongs to the peptidase M24A family. Methionine aminopeptidase type 1 subfamily. Monomer. It depends on Co(2+) as a cofactor. The cofactor is Zn(2+). Requires Mn(2+) as cofactor. Fe(2+) is required as a cofactor.

The catalysed reaction is Release of N-terminal amino acids, preferentially methionine, from peptides and arylamides.. Removes the N-terminal methionine from nascent proteins. The N-terminal methionine is often cleaved when the second residue in the primary sequence is small and uncharged (Met-Ala-, Cys, Gly, Pro, Ser, Thr, or Val). Requires deformylation of the N(alpha)-formylated initiator methionine before it can be hydrolyzed. This is Methionine aminopeptidase from Chlamydia muridarum (strain MoPn / Nigg).